The sequence spans 104 residues: MGGYKGIKADGGKVDQAKQLAAKTAKDIEACQKQTQQLAEYIEGSDWEGQFANKVKDVLLIMAKFQEELVQPMADHQKAIDNLSQNLAKYDTLSIKQGLDRVNP.

It belongs to the WXG100 family. In terms of assembly, homodimer. When mixed with EsxA does not form heterodimers. Forms heterodimers with EsxD.

It is found in the secreted. Its function is as follows. Virulence factor that is important for the establishment of infection in the host. EsxB is required for EsxA synthesis as well as secretion. Mediates together with EsxA the release of S.aureus from the host cell. Also inhibits host cytokine production and thus modulates dendritic cell-mediated immunity. This is Type VII secretion system extracellular protein B from Staphylococcus aureus (strain USA300).